A 620-amino-acid chain; its full sequence is UvrABC system protein C (620 aa).

The region spanning 13-92 (DKPGVYIMKN…IKKYSPRYNI (80 aa)) is the GIY-YIG domain. One can recognise a UVR domain in the interval 204–239 (TSIIKKLKLEMEKAAEELEFEKAAKIRDRILAIELI).

The protein belongs to the UvrC family. As to quaternary structure, interacts with UvrB in an incision complex.

The protein localises to the cytoplasm. The UvrABC repair system catalyzes the recognition and processing of DNA lesions. UvrC both incises the 5' and 3' sides of the lesion. The N-terminal half is responsible for the 3' incision and the C-terminal half is responsible for the 5' incision. This is UvrABC system protein C from Clostridium perfringens (strain 13 / Type A).